The primary structure comprises 424 residues: UDP-N-acetylglucosamine 1-carboxyvinyltransferase (424 aa).

Position 22 to 23 (22 to 23 (KN)) interacts with phosphoenolpyruvate. R93 is a binding site for UDP-N-acetyl-alpha-D-glucosamine. C117 acts as the Proton donor in catalysis. C117 bears the 2-(S-cysteinyl)pyruvic acid O-phosphothioketal mark. UDP-N-acetyl-alpha-D-glucosamine is bound by residues 122–126 (RPVDL), 162–165 (KVSV), D307, and I329.

This sequence belongs to the EPSP synthase family. MurA subfamily.

It localises to the cytoplasm. It catalyses the reaction phosphoenolpyruvate + UDP-N-acetyl-alpha-D-glucosamine = UDP-N-acetyl-3-O-(1-carboxyvinyl)-alpha-D-glucosamine + phosphate. The protein operates within cell wall biogenesis; peptidoglycan biosynthesis. Cell wall formation. Adds enolpyruvyl to UDP-N-acetylglucosamine. The chain is UDP-N-acetylglucosamine 1-carboxyvinyltransferase from Histophilus somni (strain 129Pt) (Haemophilus somnus).